Here is a 983-residue protein sequence, read N- to C-terminus: Bifunctional glutamine synthetase adenylyltransferase/adenylyl-removing enzyme (983 aa).

The adenylyl removase stretch occupies residues 1–468 (MTVENAKALF…KQYAALFAQA (468 aa)). An adenylyl transferase region spans residues 473-983 (AASGNLVFTG…FDKLVGHGAD (511 aa)).

This sequence belongs to the GlnE family. Requires Mg(2+) as cofactor.

It carries out the reaction [glutamine synthetase]-O(4)-(5'-adenylyl)-L-tyrosine + phosphate = [glutamine synthetase]-L-tyrosine + ADP. It catalyses the reaction [glutamine synthetase]-L-tyrosine + ATP = [glutamine synthetase]-O(4)-(5'-adenylyl)-L-tyrosine + diphosphate. Its function is as follows. Involved in the regulation of glutamine synthetase GlnA, a key enzyme in the process to assimilate ammonia. When cellular nitrogen levels are high, the C-terminal adenylyl transferase (AT) inactivates GlnA by covalent transfer of an adenylyl group from ATP to specific tyrosine residue of GlnA, thus reducing its activity. Conversely, when nitrogen levels are low, the N-terminal adenylyl removase (AR) activates GlnA by removing the adenylyl group by phosphorolysis, increasing its activity. The regulatory region of GlnE binds the signal transduction protein PII (GlnB) which indicates the nitrogen status of the cell. The chain is Bifunctional glutamine synthetase adenylyltransferase/adenylyl-removing enzyme from Brucella suis biovar 1 (strain 1330).